The primary structure comprises 196 residues: Protein GrpE (196 aa).

A disordered region spans residues 1 to 39 (MSSKEQKTPEGQAPEEIIMDQHEEIEAVEPEASAEQVDP).

Belongs to the GrpE family. As to quaternary structure, homodimer.

It is found in the cytoplasm. Functionally, participates actively in the response to hyperosmotic and heat shock by preventing the aggregation of stress-denatured proteins, in association with DnaK and GrpE. It is the nucleotide exchange factor for DnaK and may function as a thermosensor. Unfolded proteins bind initially to DnaJ; upon interaction with the DnaJ-bound protein, DnaK hydrolyzes its bound ATP, resulting in the formation of a stable complex. GrpE releases ADP from DnaK; ATP binding to DnaK triggers the release of the substrate protein, thus completing the reaction cycle. Several rounds of ATP-dependent interactions between DnaJ, DnaK and GrpE are required for fully efficient folding. The sequence is that of Protein GrpE from Escherichia coli (strain SMS-3-5 / SECEC).